The chain runs to 362 residues: MKPSIYSLTRQEMIEWAEAQGEKKFRAAQIWEWLYRKRVQSFEEMTNLSKDLIAKLNDQFVVNPLKQRIVQESADGTVKYLFELPDGMLIETVLMRQHYGLSVCVTTQVGCNIGCTFCASGLIKKQRDLNNGEIVSQIMLVQKYFDERGQDERVSHIVVMGIGEPFDNYDNVLKFVRTVNDDKGLAIGARHITVSTSGLAHKIRDFANEGVQVNLAVSLHAPNNDLRTSIMRINRSFPIEKLFAAIEYYIETTNRRVTFEYIMLNEVNDGVEQAKELAELLKNIRKLSYVNLIPYNPVSEHDQYSRSPKERVMAFYDTLKKNGVNCVVRQEHGTDIDAACGQLRSNTMKRDREKALVENVQP.

The active-site Proton acceptor is Glu-91. The region spanning 97–329 (QHYGLSVCVT…KKNGVNCVVR (233 aa)) is the Radical SAM core domain. Cys-104 and Cys-340 form a disulfide bridge. 3 residues coordinate [4Fe-4S] cluster: Cys-111, Cys-115, and Cys-118. Residues 163–164 (GE), Ser-195, 218–220 (SLH), and Asn-296 each bind S-adenosyl-L-methionine. Catalysis depends on Cys-340, which acts as the S-methylcysteine intermediate.

Belongs to the radical SAM superfamily. RlmN family. [4Fe-4S] cluster serves as cofactor.

The protein resides in the cytoplasm. It catalyses the reaction adenosine(2503) in 23S rRNA + 2 reduced [2Fe-2S]-[ferredoxin] + 2 S-adenosyl-L-methionine = 2-methyladenosine(2503) in 23S rRNA + 5'-deoxyadenosine + L-methionine + 2 oxidized [2Fe-2S]-[ferredoxin] + S-adenosyl-L-homocysteine. The enzyme catalyses adenosine(37) in tRNA + 2 reduced [2Fe-2S]-[ferredoxin] + 2 S-adenosyl-L-methionine = 2-methyladenosine(37) in tRNA + 5'-deoxyadenosine + L-methionine + 2 oxidized [2Fe-2S]-[ferredoxin] + S-adenosyl-L-homocysteine. Functionally, specifically methylates position 2 of adenine 2503 in 23S rRNA and position 2 of adenine 37 in tRNAs. This chain is Probable dual-specificity RNA methyltransferase RlmN, found in Streptococcus gordonii (strain Challis / ATCC 35105 / BCRC 15272 / CH1 / DL1 / V288).